Consider the following 187-residue polypeptide: Glutathione-dependent formaldehyde-activating enzyme (187 aa).

The CENP-V/GFA domain occupies 20 to 167 (FAGGTLVCKC…LKELGLEPYD (148 aa)). Positions 27, 29, 48, 50, 53, 95, and 98 each coordinate Zn(2+).

This sequence belongs to the Gfa family. The cofactor is Zn(2+).

The enzyme catalyses S-(hydroxymethyl)glutathione = glutathione + formaldehyde. It functions in the pathway one-carbon metabolism; formaldehyde degradation; formate from formaldehyde (glutathione route): step 1/3. Catalyzes the condensation of formaldehyde and glutathione to S-hydroxymethylglutathione. The protein is Glutathione-dependent formaldehyde-activating enzyme of Bradyrhizobium sp. (strain BTAi1 / ATCC BAA-1182).